Here is a 358-residue protein sequence, read N- to C-terminus: Protein-glutamate methylesterase/protein-glutamine glutaminase 1 (358 aa).

The Response regulatory domain maps to 8–125 (RVLIVDDSAV…ARGLEGYAEE (118 aa)). Asp59 carries the 4-aspartylphosphate modification. The CheB-type methylesterase domain maps to 165-352 (FRTTDRLIAI…LDRVAERLLA (188 aa)). Active-site residues include Ser177, His203, and Asp299.

It belongs to the CheB family. Post-translationally, phosphorylated by CheA. Phosphorylation of the N-terminal regulatory domain activates the methylesterase activity.

The protein localises to the cytoplasm. It catalyses the reaction [protein]-L-glutamate 5-O-methyl ester + H2O = L-glutamyl-[protein] + methanol + H(+). The catalysed reaction is L-glutaminyl-[protein] + H2O = L-glutamyl-[protein] + NH4(+). Its function is as follows. Involved in chemotaxis. Part of a chemotaxis signal transduction system that modulates chemotaxis in response to various stimuli. Catalyzes the demethylation of specific methylglutamate residues introduced into the chemoreceptors (methyl-accepting chemotaxis proteins or MCP) by CheR. Also mediates the irreversible deamidation of specific glutamine residues to glutamic acid. This chain is Protein-glutamate methylesterase/protein-glutamine glutaminase 1, found in Xanthomonas axonopodis pv. citri (strain 306).